The chain runs to 197 residues: Short chain dehydrogenase ausX (197 aa).

NADP(+)-binding residues include isoleucine 49, aspartate 95, arginine 157, and tyrosine 189. The active-site Proton acceptor is the tyrosine 189. Tyrosine 189 acts as the Proton donor in catalysis.

The protein belongs to the short-chain dehydrogenases/reductases (SDR) family.

Its pathway is secondary metabolite biosynthesis; terpenoid biosynthesis. Its function is as follows. Short chain dehydrogenase; part of the gene cluster A that mediates the biosynthesis of austinol and dehydroaustinol, two fungal meroterpenoids. The first step of the pathway is the synthesis of 3,5-dimethylorsellinic acid by the polyketide synthase ausA. 3,5-dimethylorsellinic acid is then prenylated by the polyprenyl transferase ausN. Further epoxidation by the FAD-dependent monooxygenase ausM and cyclization by the probable terpene cyclase ausL lead to the formation of protoaustinoid A. Protoaustinoid A is then oxidized to spiro-lactone preaustinoid A3 by the combined action of the FAD-binding monooxygenases ausB and ausC, and the dioxygenase ausE. Acid-catalyzed keto-rearrangement and ring contraction of the tetraketide portion of preaustinoid A3 by ausJ lead to the formation of preaustinoid A4. The aldo-keto reductase ausK, with the help of ausH, is involved in the next step by transforming preaustinoid A4 into isoaustinone which is in turn hydroxylated by the P450 monooxygenase ausI to form austinolide. Finally, the cytochrome P450 monooxygenase ausG modifies austinolide to austinol. Austinol can be further modified to dehydroaustinol which forms a diffusible complex with diorcinol that initiates conidiation. Due to genetic rearrangements of the clusters and the subsequent loss of some enzymes, the end products of the Emericella nidulans austinoid biosynthesis clusters are austinol and dehydroaustinol, even if additional enzymes, such as the O-acetyltransferase ausQ and the cytochrome P450 monooxygenase ausR are still functional. In Emericella nidulans (strain FGSC A4 / ATCC 38163 / CBS 112.46 / NRRL 194 / M139) (Aspergillus nidulans), this protein is Short chain dehydrogenase ausX.